The chain runs to 463 residues: Dialkyldecalin synthase (463 aa).

FAD-binding positions include Val-13, 32-33 (ER), Ile-121, and Asp-275.

The protein belongs to the PheA/TfdB FAD monooxygenase family. Homodimer. FAD is required as a cofactor.

It catalyses the reaction 4-[(2E,7S,8E,10E,13R,14R,16E,18E)-14-ethyl-7,13-dihydroxy-2,16,18-trimethylicosa-2,8,10,16,18-pentaenoyl]-2-methylidene-5-oxo-2,5-dihydro-1H-pyrrol-3-olate = 4-[(1R,2R,4aS,5S,8aR)-2-[(2R,3R,5E,7E)-3-ethyl-2-hydroxy-5,7-dimethylnona-5,7-dien-1-yl]-5-hydroxy-1-methyl-1,2,4a,5,6,7,8,8a-octahydronaphthalene-1-carbonyl]-2-methylidene-5-oxo-2,5-dihydro-1H-pyrrol-3-olate. Its pathway is antibiotic biosynthesis. In terms of biological role, involved in the biosynthesis of the spirotetramate antibiotics pyrroindomycins. Catalyzes the intramolecular cyclization forming the dialkyldecalin moiety in pyrroindomycins, via an endo-selective [4+2] cycloaddition reaction. In Streptomyces rugosporus, this protein is Dialkyldecalin synthase.